Here is a 206-residue protein sequence, read N- to C-terminus: Small ribosomal subunit protein uS4 (206 aa).

An S4 RNA-binding domain is found at 94–156 (RRLDNVVYRL…SRRRMYFKNL (63 aa)).

The protein belongs to the universal ribosomal protein uS4 family. As to quaternary structure, part of the 30S ribosomal subunit. Contacts protein S5. The interaction surface between S4 and S5 is involved in control of translational fidelity.

One of the primary rRNA binding proteins, it binds directly to 16S rRNA where it nucleates assembly of the body of the 30S subunit. In terms of biological role, with S5 and S12 plays an important role in translational accuracy. The protein is Small ribosomal subunit protein uS4 of Roseiflexus castenholzii (strain DSM 13941 / HLO8).